The sequence spans 342 residues: Ribosomal RNA small subunit methyltransferase C (342 aa).

The protein belongs to the methyltransferase superfamily. RsmC family. In terms of assembly, monomer.

Its subcellular location is the cytoplasm. The enzyme catalyses guanosine(1207) in 16S rRNA + S-adenosyl-L-methionine = N(2)-methylguanosine(1207) in 16S rRNA + S-adenosyl-L-homocysteine + H(+). Functionally, specifically methylates the guanine in position 1207 of 16S rRNA in the 30S particle. This Aeromonas hydrophila subsp. hydrophila (strain ATCC 7966 / DSM 30187 / BCRC 13018 / CCUG 14551 / JCM 1027 / KCTC 2358 / NCIMB 9240 / NCTC 8049) protein is Ribosomal RNA small subunit methyltransferase C.